Consider the following 182-residue polypeptide: Probable peptidyl-prolyl cis-trans isomerase A (182 aa).

Positions 13 to 181 constitute a PPIase cyclophilin-type domain; sequence QNATATLHTN…EPVVIDSITI (169 aa). A disordered region spans residues 161-182; sequence TTATDGNDRPTEPVVIDSITIS.

This sequence belongs to the cyclophilin-type PPIase family.

Its subcellular location is the cytoplasm. It carries out the reaction [protein]-peptidylproline (omega=180) = [protein]-peptidylproline (omega=0). PPIases accelerate the folding of proteins. It catalyzes the cis-trans isomerization of proline imidic peptide bonds in oligopeptides. The polypeptide is Probable peptidyl-prolyl cis-trans isomerase A (ppiA) (Mycobacterium leprae (strain TN)).